Consider the following 97-residue polypeptide: uncharacterized protein (97 aa).

The protein belongs to the mycobacterial PE family.

Functionally, part of the ESX-1 / type VII specialized secretion system (T7SS), which exports several proteins including EsxA and EsxB. Plays a role in DNA conjugation, in at least a donor strain. This is an uncharacterized protein from Mycolicibacterium smegmatis (strain ATCC 700084 / mc(2)155) (Mycobacterium smegmatis).